The sequence spans 442 residues: MTPDLVARFWLVELHVRLPAWLRGITSASASVAVKRPGSSKKPLEPAPQPAPYKPTHYRHIIYAYDVMEEKCEIPVLEHDPFDFLDPQKTLVPPENTILIDPVAVGLPWFSTMKGTPQCIHWREAEAAGLELIEQVMAARGAGAVIPEKLKTSDQRRKMMELVETAVTICIYLYAVSDAARIRVLTKSIVFLFLHDDVMESKANAEGNSILEGWDTDTFKANELEGESRNDIFLDFCREAIALDPVLGLELMQDTVRWARYSRVNSTKADKTHATWQDFRDFRELDIAYDFMITAVRFGAAILYDPAERPVFEWIEKLYIRHCLYINDLYSYEKEFREHQQEGAPLHNSVHMIEQVLSVPPGSAKAILRSVLWDCERQVREEYVRLMQLPELTHTQKVYLQRLIESFAGNYMYSMSTYRYARLSGKLIGPPPEDCLLKNYVQ.

Aspartate 196, asparagine 327, serine 331, and glutamate 335 together coordinate Mg(2+). The (2E,6E)-farnesyl diphosphate site is built by arginine 419 and tyrosine 420.

This sequence belongs to the terpene synthase family. In terms of assembly, homodimer. Mg(2+) serves as cofactor.

It carries out the reaction (2E,6E)-farnesyl diphosphate = dauca-4,7-diene + diphosphate. It functions in the pathway secondary metabolite biosynthesis. Terpene cyclase; part of the gene cluster that mediates the biosynthesis of aculenes, a unique type of norsesquiterpenes that contain a nordaucane skeleton linked to an L-proline moiety and are of mixed biosynthetic origin. The pathway begins with the synthesis of dauca-4,7-diene by the terpene cyclase aneC using farnesyl pyrophosphate (FPP) as substrate. The cytochrome P450 monooxygenase aneF then performs the initial oxidation at C-12 of dauca-4,7-diene to yield asperaculane D. Asperaculane D is substrate of the cytochrome P450 monooxygenase aneD for C-10 hydroxylation to yield asperaculane E. The cytochrome P450 monooxygenase aneG then converts asperaculane E into aculene D via C-2 oxidation. The monomodular nonribosomal peptide synthtase aneB adenylates L-proline and the thiohydrolase aneE transfers this activated L-proline derivative to aculenes D and C to produce respectively aculenes B and A. The dioxygenase aneA converts aculene D into aculene C, and aculene B into aculene A by introducing the 5,6-alkene moiety. Asperculanes A, B, C and F, as well as 14-prolyl asperculane C, might be shunt products of the pathway. This is Terpene cyclase aneC from Aspergillus aculeatus (strain ATCC 16872 / CBS 172.66 / WB 5094).